A 274-amino-acid polypeptide reads, in one-letter code: Large ribosomal subunit protein uL2 (274 aa).

2 disordered regions span residues 21–59 (KVGLSKDEPEKSLTSGKKSSGGRNNHGRITTRHRGGGHK) and 224–274 (AMNP…QLKG). The segment covering 32 to 42 (SLTSGKKSSGG) has biased composition (low complexity). The segment covering 45 to 59 (NHGRITTRHRGGGHK) has biased composition (basic residues). A compositionally biased stretch (basic and acidic residues) spans 263 to 274 (KSSDKYIKQLKG).

Belongs to the universal ribosomal protein uL2 family. As to quaternary structure, part of the 50S ribosomal subunit. Forms a bridge to the 30S subunit in the 70S ribosome.

In terms of biological role, one of the primary rRNA binding proteins. Required for association of the 30S and 50S subunits to form the 70S ribosome, for tRNA binding and peptide bond formation. It has been suggested to have peptidyltransferase activity; this is somewhat controversial. Makes several contacts with the 16S rRNA in the 70S ribosome. The protein is Large ribosomal subunit protein uL2 of Wolbachia pipientis wMel.